The following is a 165-amino-acid chain: MRIGIGFDVHPLKKGETLILGGVHIQGEYGLAGHSDADVLTHALMDAILGAMGEADIGYHFPDTDPSYRGISSLKLLKKVYNMMKPRGFSIGNIDLIIMAQSPKLSPYYNKIKENYTRILQLDSSRINIKATTTENLGFVGREEGIAAQAAVLLIDTKEGDINAG.

Residues Asp8 and His10 each coordinate a divalent metal cation. Residues 8–10 (DVH) and 34–35 (HS) contribute to the 4-CDP-2-C-methyl-D-erythritol 2-phosphate site. Position 42 (His42) interacts with a divalent metal cation. Residues 56 to 58 (DIG), 61 to 65 (FPDTD), 132 to 135 (TTTE), Phe139, and Arg142 contribute to the 4-CDP-2-C-methyl-D-erythritol 2-phosphate site.

The protein belongs to the IspF family. As to quaternary structure, homotrimer. A divalent metal cation serves as cofactor.

It carries out the reaction 4-CDP-2-C-methyl-D-erythritol 2-phosphate = 2-C-methyl-D-erythritol 2,4-cyclic diphosphate + CMP. Its pathway is isoprenoid biosynthesis; isopentenyl diphosphate biosynthesis via DXP pathway; isopentenyl diphosphate from 1-deoxy-D-xylulose 5-phosphate: step 4/6. Functionally, involved in the biosynthesis of isopentenyl diphosphate (IPP) and dimethylallyl diphosphate (DMAPP), two major building blocks of isoprenoid compounds. Catalyzes the conversion of 4-diphosphocytidyl-2-C-methyl-D-erythritol 2-phosphate (CDP-ME2P) to 2-C-methyl-D-erythritol 2,4-cyclodiphosphate (ME-CPP) with a corresponding release of cytidine 5-monophosphate (CMP). The chain is 2-C-methyl-D-erythritol 2,4-cyclodiphosphate synthase from Halothermothrix orenii (strain H 168 / OCM 544 / DSM 9562).